We begin with the raw amino-acid sequence, 369 residues long: Flagellar P-ring protein (369 aa).

Positions 1-22 (MLNFKHLMAAALLLSTSLGVQA) are cleaved as a signal peptide.

The protein belongs to the FlgI family. In terms of assembly, the basal body constitutes a major portion of the flagellar organelle and consists of four rings (L,P,S, and M) mounted on a central rod.

Its subcellular location is the periplasm. The protein localises to the bacterial flagellum basal body. Its function is as follows. Assembles around the rod to form the L-ring and probably protects the motor/basal body from shearing forces during rotation. This Pseudomonas fluorescens (strain ATCC BAA-477 / NRRL B-23932 / Pf-5) protein is Flagellar P-ring protein.